A 216-amino-acid chain; its full sequence is GTP cyclohydrolase 1 (216 aa).

3 residues coordinate Zn(2+): cysteine 108, histidine 111, and cysteine 179.

This sequence belongs to the GTP cyclohydrolase I family. As to quaternary structure, toroid-shaped homodecamer, composed of two pentamers of five dimers.

It carries out the reaction GTP + H2O = 7,8-dihydroneopterin 3'-triphosphate + formate + H(+). It participates in cofactor biosynthesis; 7,8-dihydroneopterin triphosphate biosynthesis; 7,8-dihydroneopterin triphosphate from GTP: step 1/1. The polypeptide is GTP cyclohydrolase 1 (Shewanella oneidensis (strain ATCC 700550 / JCM 31522 / CIP 106686 / LMG 19005 / NCIMB 14063 / MR-1)).